The chain runs to 393 residues: Chorismate synthase (393 aa).

NADP(+) contacts are provided by arginine 39 and arginine 45. Residues 133 to 135 (RSS), 256 to 257 (NA), glycine 301, 316 to 320 (KPIPT), and arginine 342 each bind FMN.

Belongs to the chorismate synthase family. Homotetramer. FMNH2 serves as cofactor.

The catalysed reaction is 5-O-(1-carboxyvinyl)-3-phosphoshikimate = chorismate + phosphate. Its pathway is metabolic intermediate biosynthesis; chorismate biosynthesis; chorismate from D-erythrose 4-phosphate and phosphoenolpyruvate: step 7/7. Catalyzes the anti-1,4-elimination of the C-3 phosphate and the C-6 proR hydrogen from 5-enolpyruvylshikimate-3-phosphate (EPSP) to yield chorismate, which is the branch point compound that serves as the starting substrate for the three terminal pathways of aromatic amino acid biosynthesis. This reaction introduces a second double bond into the aromatic ring system. The sequence is that of Chorismate synthase from Lysinibacillus sphaericus (strain C3-41).